The primary structure comprises 210 residues: Thymidylate kinase (210 aa).

10 to 17 contacts ATP; sequence GLEGAGKT.

The protein belongs to the thymidylate kinase family.

It catalyses the reaction dTMP + ATP = dTDP + ADP. Functionally, phosphorylation of dTMP to form dTDP in both de novo and salvage pathways of dTTP synthesis. The sequence is that of Thymidylate kinase from Erwinia tasmaniensis (strain DSM 17950 / CFBP 7177 / CIP 109463 / NCPPB 4357 / Et1/99).